Consider the following 535-residue polypeptide: Inositol 1,4,5-trisphosphate receptor-interacting protein-like 2 (535 aa).

The first 32 residues, 1–32 (MSVRYTLNLRVFWPLVTGLCTALVCLYHALRS), serve as a signal peptide directing secretion. Over 33–43 (SEDARAESPDG) the chain is Extracellular. Residues 44–64 (ADSGFPLLKVAILLLLGYILL) form a helical membrane-spanning segment. The Cytoplasmic segment spans residues 65–535 (RCRHAIRQRL…RIQGSPEDEP (471 aa)). The residue at position 139 (S139) is a Phosphoserine.

It belongs to the ITPRIP family.

It localises to the membrane. The protein is Inositol 1,4,5-trisphosphate receptor-interacting protein-like 2 (Itpripl2) of Mus musculus (Mouse).